The following is a 314-amino-acid chain: Acetyl-coenzyme A carboxylase carboxyl transferase subunit alpha (314 aa).

In terms of domain architecture, CoA carboxyltransferase C-terminal spans 38-292 (RLERKSAALL…ANAIDEELDA (255 aa)).

Belongs to the AccA family. Acetyl-CoA carboxylase is a heterohexamer composed of biotin carboxyl carrier protein (AccB), biotin carboxylase (AccC) and two subunits each of ACCase subunit alpha (AccA) and ACCase subunit beta (AccD).

The protein localises to the cytoplasm. The catalysed reaction is N(6)-carboxybiotinyl-L-lysyl-[protein] + acetyl-CoA = N(6)-biotinyl-L-lysyl-[protein] + malonyl-CoA. It functions in the pathway lipid metabolism; malonyl-CoA biosynthesis; malonyl-CoA from acetyl-CoA: step 1/1. Its function is as follows. Component of the acetyl coenzyme A carboxylase (ACC) complex. First, biotin carboxylase catalyzes the carboxylation of biotin on its carrier protein (BCCP) and then the CO(2) group is transferred by the carboxyltransferase to acetyl-CoA to form malonyl-CoA. This chain is Acetyl-coenzyme A carboxylase carboxyl transferase subunit alpha, found in Erythrobacter litoralis (strain HTCC2594).